A 262-amino-acid polypeptide reads, in one-letter code: Lysine 5,6-aminomutase beta subunit (262 aa).

Residues 120 to 262 (KIVVVGASTG…VKTLNDRMNS (143 aa)) form the B12-binding domain. Residues 130–136 (TDAHTVG) and His-133 each bind adenosylcob(III)alamin. Lys-144 is modified (N6-(pyridoxal phosphate)lysine). Residues 185–192 (LVSQTVTQ), 219–223 (LCGGP), and 239–244 (FGPGRF) each bind adenosylcob(III)alamin.

The protein belongs to the KamE family. As to quaternary structure, heterotetramer of 2 alpha and 2 beta subunits. It depends on adenosylcob(III)alamin as a cofactor. The cofactor is pyridoxal 5'-phosphate.

The catalysed reaction is (3S)-3,6-diaminohexanoate = (3S,5S)-3,5-diaminohexanoate. It carries out the reaction D-lysine = (2R,5S)-2,5-diaminohexanoate. It participates in amino-acid metabolism; lysine degradation. With respect to regulation, rapidly inactivated in the presence of D-lysine and to a lesser extent in the absence of adenosylcobalamin (Adocbl). Activity is stable in the presence of Adocbl when D-lysine is absent. Adocbl imparts thermal stability at 37 degrees Celsius. Its function is as follows. Catalyzes the migration of the L-beta-lysine and D-lysine epsilon amino group to the delta carbon to produce 3,5-diaminohexanoate and 2,5-diaminohexanoate, respectively. This chain is Lysine 5,6-aminomutase beta subunit (kamE), found in Acetoanaerobium sticklandii (strain ATCC 12662 / DSM 519 / JCM 1433 / CCUG 9281 / NCIMB 10654 / HF) (Clostridium sticklandii).